Reading from the N-terminus, the 745-residue chain is Polyribonucleotide nucleotidyltransferase (745 aa).

D487 and D493 together coordinate Mg(2+). The KH domain maps to 554-613 (PRIETMQIPTDKIRDVIGTGGKIIREIVEKTGAKINIEDTGIVKIASSDGKAIKAAYNWI). Positions 623–691 (GTIYDGTIVK…ERGKIRLSMK (69 aa)) constitute an S1 motif domain. Residues 695–745 (QETGEDLTEKLKAERAERGEPEREERSDRGDRGDRGPRRDRGERRRESSGE) are disordered. Over residues 701–745 (LTEKLKAERAERGEPEREERSDRGDRGDRGPRRDRGERRRESSGE) the composition is skewed to basic and acidic residues.

Belongs to the polyribonucleotide nucleotidyltransferase family. Mg(2+) is required as a cofactor.

Its subcellular location is the cytoplasm. It catalyses the reaction RNA(n+1) + phosphate = RNA(n) + a ribonucleoside 5'-diphosphate. Its function is as follows. Involved in mRNA degradation. Catalyzes the phosphorolysis of single-stranded polyribonucleotides processively in the 3'- to 5'-direction. This chain is Polyribonucleotide nucleotidyltransferase, found in Methylorubrum extorquens (strain CM4 / NCIMB 13688) (Methylobacterium extorquens).